The sequence spans 342 residues: HTH-type transcriptional regulator GbpR (342 aa).

One can recognise an HTH lysR-type domain in the interval 16-73 (LKLRHLQLFVALDEHRNLHRAAASLTMSQPAASKLLGDLEESLGVTLFERHGRGVEPN). The H-T-H motif DNA-binding region spans 33–52 (LHRAAASLTMSQPAASKLLG).

The protein belongs to the LysR transcriptional regulatory family.

Does not seem to be required for sbpA expression. This is HTH-type transcriptional regulator GbpR (gbpR) from Azospirillum brasilense.